The following is a 581-amino-acid chain: 4-hydroxy-3-methylbut-2-en-1-yl diphosphate synthase (flavodoxin) (581 aa).

Residues Cys489, Cys492, Cys523, and Glu530 each contribute to the [4Fe-4S] cluster site.

This sequence belongs to the IspG family. [4Fe-4S] cluster serves as cofactor.

It carries out the reaction (2E)-4-hydroxy-3-methylbut-2-enyl diphosphate + oxidized [flavodoxin] + H2O + 2 H(+) = 2-C-methyl-D-erythritol 2,4-cyclic diphosphate + reduced [flavodoxin]. The protein operates within isoprenoid biosynthesis; isopentenyl diphosphate biosynthesis via DXP pathway; isopentenyl diphosphate from 1-deoxy-D-xylulose 5-phosphate: step 5/6. Converts 2C-methyl-D-erythritol 2,4-cyclodiphosphate (ME-2,4cPP) into 1-hydroxy-2-methyl-2-(E)-butenyl 4-diphosphate. This chain is 4-hydroxy-3-methylbut-2-en-1-yl diphosphate synthase (flavodoxin), found in Porphyromonas gingivalis (strain ATCC BAA-308 / W83).